A 123-amino-acid polypeptide reads, in one-letter code: Large ribosomal subunit protein uL14 (123 aa).

The protein belongs to the universal ribosomal protein uL14 family. In terms of assembly, part of the 50S ribosomal subunit. Forms a cluster with proteins L3 and L19. In the 70S ribosome, L14 and L19 interact and together make contacts with the 16S rRNA in bridges B5 and B8.

Its function is as follows. Binds to 23S rRNA. Forms part of two intersubunit bridges in the 70S ribosome. The polypeptide is Large ribosomal subunit protein uL14 (Vibrio parahaemolyticus serotype O3:K6 (strain RIMD 2210633)).